The sequence spans 510 residues: MISKLLKIVLLTAGVIGNTLADSRIHEQYLVKAFPNEPVDYEGRMHAGHLNQTDQLDGDLFFWMFESVKPEYEHRSILWLNGGPGCSSEDGSLMEVGPFRLDDNNTFQLNPGRWDELGNLLFVDQPLGTGYSYSLAKDFQSNNEKMANDFSIFFEKFLEEFPERANDEWFIAGESFAGQYIPHIAAKLKEKNLVNLGGLAIGNGWINPLSHYETYLNYLVEKGMVDFESELGQYLHHSWAECLLAFDKIGSGSGDLSKCESFLGDILYMVSKEPGKACMNMYDISLESTYPTCGMDWPYDLSYLTEFLSTREAMTSLNVNLEKVHDWEECNDDVALQYAREGIESSSKLIQDLVSTVPILLFYGENDFLCNYLSGEKLTRSLEWNGAVGFQNQSAQPFYLPGYSDQPSGSYVSSRNLTFARIVEASHMVPYDHPNEMKTLITAFFNNDFASLPSVPKPSPDLGNGNYKWLYLGLIPVALTIIILFSIYLCRRFGLFGLSKQRYQPISPTP.

A signal peptide spans 1–21 (MISKLLKIVLLTAGVIGNTLA). Over 22 to 468 (DSRIHEQYLV…SPDLGNGNYK (447 aa)) the chain is Lumenal. 2 N-linked (GlcNAc...) asparagine glycosylation sites follow: N51 and N104. Catalysis depends on residues S175 and D367. 2 N-linked (GlcNAc...) asparagine glycosylation sites follow: N392 and N416. Residue H427 is part of the active site. The helical transmembrane segment at 469-489 (WLYLGLIPVALTIIILFSIYL) threads the bilayer. The Cytoplasmic segment spans residues 490 to 510 (CRRFGLFGLSKQRYQPISPTP).

Belongs to the peptidase S10 family.

The protein localises to the golgi apparatus. It localises to the trans-Golgi network membrane. Its subcellular location is the vacuole membrane. The enzyme catalyses Preferential release of a C-terminal arginine or lysine residue.. In terms of biological role, protease with a carboxypeptidase B-like function involved in the C-terminal processing of the lysine and arginine residues from protein precursors. Promotes cell fusion and is involved in the programmed cell death. The chain is Pheromone-processing carboxypeptidase kex1 (kex1) from Schizosaccharomyces pombe (strain 972 / ATCC 24843) (Fission yeast).